The primary structure comprises 588 residues: Proline--tRNA ligase (588 aa).

It belongs to the class-II aminoacyl-tRNA synthetase family. ProS type 1 subfamily. As to quaternary structure, homodimer.

The protein resides in the cytoplasm. It carries out the reaction tRNA(Pro) + L-proline + ATP = L-prolyl-tRNA(Pro) + AMP + diphosphate. Catalyzes the attachment of proline to tRNA(Pro) in a two-step reaction: proline is first activated by ATP to form Pro-AMP and then transferred to the acceptor end of tRNA(Pro). As ProRS can inadvertently accommodate and process non-cognate amino acids such as alanine and cysteine, to avoid such errors it has two additional distinct editing activities against alanine. One activity is designated as 'pretransfer' editing and involves the tRNA(Pro)-independent hydrolysis of activated Ala-AMP. The other activity is designated 'posttransfer' editing and involves deacylation of mischarged Ala-tRNA(Pro). The misacylated Cys-tRNA(Pro) is not edited by ProRS. This chain is Proline--tRNA ligase, found in Helicobacter hepaticus (strain ATCC 51449 / 3B1).